Here is a 483-residue protein sequence, read N- to C-terminus: Ribulose bisphosphate carboxylase large chain (483 aa).

Residues 1-2 constitute a propeptide that is removed on maturation; that stretch reads MS. Substrate-binding residues include N123 and T173. Residue K175 is the Proton acceptor of the active site. Residue K177 participates in substrate binding. Positions 201, 203, and 204 each coordinate Mg(2+). N6-carboxylysine is present on K201. Position 208 is a phosphoserine (S208). Residue H294 is the Proton acceptor of the active site. R295 and H327 together coordinate substrate. T330 bears the Phosphothreonine mark. Position 379 (S379) interacts with substrate.

This sequence belongs to the RuBisCO large chain family. Type I subfamily. Heterohexadecamer of 8 large chains and 8 small chains; disulfide-linked. The disulfide link is formed within the large subunit homodimers. Mg(2+) serves as cofactor. In terms of processing, the disulfide bond which can form in the large chain dimeric partners within the hexadecamer appears to be associated with oxidative stress and protein turnover.

It is found in the plastid. The protein resides in the chloroplast. It carries out the reaction 2 (2R)-3-phosphoglycerate + 2 H(+) = D-ribulose 1,5-bisphosphate + CO2 + H2O. The catalysed reaction is D-ribulose 1,5-bisphosphate + O2 = 2-phosphoglycolate + (2R)-3-phosphoglycerate + 2 H(+). In terms of biological role, ruBisCO catalyzes two reactions: the carboxylation of D-ribulose 1,5-bisphosphate, the primary event in carbon dioxide fixation, as well as the oxidative fragmentation of the pentose substrate in the photorespiration process. Both reactions occur simultaneously and in competition at the same active site. The sequence is that of Ribulose bisphosphate carboxylase large chain from Aethionema cordifolium (Lebanon stonecress).